A 221-amino-acid chain; its full sequence is MDYRNQSLGALAIAIPRATKLFRQHQLDFCCGGKQTLLRAANKLNLDIDALEAQLSALQTEPHSSEDWQQQPLTNLISFIISRYHDRHREQLPELVLMAEKVERVHGEKPTCPRGLAAELSAILEELTQHMYKEEQILFPMIQRGMGSQASGPIFVMEAEHDAVGQQLDVVKQLTQNVTPPEGACNTWRALYTGINEFITDLMEHIHLENNLLFPRALRGE.

Belongs to the RIC family. YtfE subfamily. In terms of assembly, homodimer.

The protein resides in the cytoplasm. In terms of biological role, di-iron-containing protein involved in the repair of iron-sulfur clusters damaged by oxidative and nitrosative stress conditions. This chain is Iron-sulfur cluster repair protein YtfE, found in Yersinia pestis bv. Antiqua (strain Antiqua).